We begin with the raw amino-acid sequence, 306 residues long: Ornithine carbamoyltransferase (306 aa).

Carbamoyl phosphate contacts are provided by residues 51–54 (STRT), Gln-78, Arg-102, and 129–132 (HPCQ). Residues Asn-160, Asp-223, and 227–228 (SM) contribute to the L-ornithine site. Carbamoyl phosphate contacts are provided by residues 263-264 (CL) and Arg-291.

The protein belongs to the aspartate/ornithine carbamoyltransferase superfamily. OTCase family.

It is found in the cytoplasm. It carries out the reaction carbamoyl phosphate + L-ornithine = L-citrulline + phosphate + H(+). The protein operates within amino-acid biosynthesis; L-arginine biosynthesis; L-arginine from L-ornithine and carbamoyl phosphate: step 1/3. Its function is as follows. Reversibly catalyzes the transfer of the carbamoyl group from carbamoyl phosphate (CP) to the N(epsilon) atom of ornithine (ORN) to produce L-citrulline. The protein is Ornithine carbamoyltransferase of Trichormus variabilis (strain ATCC 29413 / PCC 7937) (Anabaena variabilis).